The primary structure comprises 252 residues: tRNA (guanine-N(1)-)-methyltransferase (252 aa).

S-adenosyl-L-methionine-binding positions include glycine 118 and 138–143 (IGDYVL).

It belongs to the RNA methyltransferase TrmD family. In terms of assembly, homodimer.

Its subcellular location is the cytoplasm. It carries out the reaction guanosine(37) in tRNA + S-adenosyl-L-methionine = N(1)-methylguanosine(37) in tRNA + S-adenosyl-L-homocysteine + H(+). In terms of biological role, specifically methylates guanosine-37 in various tRNAs. This Pseudomonas paraeruginosa (strain DSM 24068 / PA7) (Pseudomonas aeruginosa (strain PA7)) protein is tRNA (guanine-N(1)-)-methyltransferase.